A 175-amino-acid polypeptide reads, in one-letter code: MAAEAETKAMITLRSCEGQVFEVAEAVAMESQTIRHMIEDKCADTGIPLPNVSAKILSKVIEYCSKHVEARGGAAAAADGDAPAPAAVEANKAVEDELKTFDAEFVKVDQSTLFDLILAANYLNIKGLLDLTCQTVADMIKGKTPEEIRKTFNIKNDFTPEEEEEVRRENQWAFE.

Residues 117–175 (ILAANYLNIKGLLDLTCQTVADMIKGKTPEEIRKTFNIKNDFTPEEEEEVRRENQWAFE) form an interaction with the F-box domain of F-box proteins region.

The protein belongs to the SKP1 family. Part of a SCF (SKP1-CUL1-F-box protein) E3 ubiquitin-protein ligase complex. Interacts with rice black streaked dwarf virus RBSDV protein P7-2. Is able to form the SCF complex together with CUL1 and the viral P7-2 protein. Interacts with D3.

Its subcellular location is the nucleus. It participates in protein modification; protein ubiquitination. In terms of biological role, involved in ubiquitination and subsequent proteasomal degradation of target proteins. Together with CUL1, a RING-box and a F-box protein, it forms a SCF E3 ubiquitin ligase complex. The functional specificity of this complex depends on the type of F-box protein. In the SCF complex, it serves as an adapter that links the F-box protein to CUL1. This is SKP1-like protein 20 from Oryza sativa subsp. japonica (Rice).